Consider the following 2988-residue polypeptide: NBPF family member NBPF14 (2988 aa).

Residues 75–119 (RQFKEEKLAEQLKQAEELRQYKVLVHSQERELTQLREKLREGRDA) adopt a coiled-coil conformation. Disordered stretches follow at residues 161 to 200 (KLSP…SKVP), 451 to 474 (EKVQ…PEDS), and 520 to 566 (WEDA…EGYS). Acidic residues predominate over residues 165–177 (ENDEDEDEDVQVE). Olduvai domains lie at 165–259 (ENDE…NILP), 436–528 (ENDN…HIIP), 529–600 (ENES…VDIG), 601–692 (RHRW…PSCP), 695–750 (SREL…LDVD), 751–843 (RIKK…RSKK), 844–919 (ERRR…LDVD), 920–1012 (RIKK…RSKK), 1013–1105 (ERRR…PSCP), 1108–1163 (SREL…LDVD), 1164–1256 (RIKK…RSKK), 1257–1349 (ERRR…PSCP), 1352–1407 (SREL…LDVD), 1408–1500 (RIKK…RSKK), 1501–1593 (ERRR…PSCP), 1596–1651 (SREL…LDVD), 1652–1744 (RFKK…RSKK), 1745–1837 (ERRR…PSCP), 1840–1895 (SREL…LDVD), 1896–1988 (RIKK…RSKK), 1989–2081 (ERRR…PSCP), 2084–2139 (SREL…LDVD), 2140–2232 (RIKK…RSKK), 2233–2325 (ERRR…PSCP), 2328–2383 (SREL…LDVD), 2384–2476 (RIKK…RSKK), 2477–2569 (ERRR…PSCP), 2572–2627 (SREL…LDVD), 2628–2720 (RIKK…RSKK), 2721–2813 (ERRR…PSCP), 2816–2889 (SREL…RSKK), and 2890–2988 (ERRR…IFPQ). A compositionally biased stretch (basic and acidic residues) spans 190–200 (EVQKAEESKVP). Composition is skewed to acidic residues over residues 530-539 (NESDDEEEEE) and 550-562 (ESEE…ESWD). Disordered stretches follow at residues 754–773 (KDEE…SREL), 828–871 (EKKG…LDEK), and 999–1038 (KGKG…ELLD). Composition is skewed to basic residues over residues 831-849 (GKGK…RRGR) and 1000-1018 (GKGK…RRGR). Residues 1243–1282 (KGKGKKRRGRRSKKERRRGRKEGEEDQNPPCPRLSRELLD) are disordered. Residues 1244 to 1262 (GKGKKRRGRRSKKERRRGR) are compositionally biased toward basic residues. The segment at 1487-1521 (KGKGKKRRGRRSKKERRRGRKEGEEDQNPPCPRLS) is disordered. The span at 1488-1506 (GKGKKRRGRRSKKERRRGR) shows a compositional bias: basic residues. A disordered region spans residues 1731–1770 (KGKGKKRRGRRSKKERRRGRKEGEEDQNPPCPRLSRELLD). Over residues 1732-1750 (GKGKKRRGRRSKKERRRGR) the composition is skewed to basic residues. The disordered stretch occupies residues 1975 to 2014 (KGKGKKRRGRRSKKERRRGRKEGEEDQNPPCPRLSRELLD). Positions 1976–1994 (GKGKKRRGRRSKKERRRGR) are enriched in basic residues. Residues 2219 to 2258 (KGKGKKRRGRRSKKERRRGRKEGEEDQNPPCPRLSRELLD) are disordered. Positions 2220 to 2238 (GKGKKRRGRRSKKERRRGR) are enriched in basic residues. Residues 2463-2502 (KGKGKKRRGRRSKKERRRGRKEGEEDQNPPCPRLSRELLD) are disordered. A compositionally biased stretch (basic residues) spans 2464 to 2482 (GKGKKRRGRRSKKERRRGR). Disordered regions lie at residues 2707-2745 (KGKG…RELL) and 2877-2909 (GKGK…CPRL). Composition is skewed to basic residues over residues 2708-2726 (GKGK…RRGR) and 2877-2895 (GKGK…RRGR).

This sequence belongs to the NBPF family. Expressed in spleen and fetal liver.

It localises to the cytoplasm. This chain is NBPF family member NBPF14, found in Homo sapiens (Human).